A 384-amino-acid polypeptide reads, in one-letter code: MLTCIARSKRAGDESSGQPDDPDSKNAKSLTSQLKDMALKASGAYRHCTPCTAAQGQGQGQGPIKNNPSSSSVKSDFESDQRFKMLYGRSNSSITATAAVAATQQQQPRVWGKEMEARLKGISSGEATPKSASGRNRVDPIVFVEEKEPKEWVAQVEPGVLITFVSLPGGGNDLKRIRFSRDMFNKLQAQRWWADNYDKVMELYNVQKLSRQAFPLPTPPRSEDENAKVEYHPEDTPATPPLNKERLPRTIHRPPGLAAYSSSDSLDHNSMQSQQFYDSGLLNSTPKVSSISVAKTETSSIDASIRSSSSRDADRSEEMSVSNASDVDNEWVEQDEPGVYITIKVLPGGKRELRRVRFSRERFGEMHARLWWEENRARIHEQYL.

2 disordered regions span residues 1 to 35 (MLTC…SQLK) and 50 to 78 (PCTA…SDFE). The 56-residue stretch at 150–205 (KEWVAQVEPGVLITFVSLPGGGNDLKRIRFSRDMFNKLQAQRWWADNYDKVMELYN) folds into the BRX 1 domain. Disordered regions lie at residues 214 to 270 (FPLP…DHNS) and 304 to 325 (SIRS…SNAS). Residues 221-235 (RSEDENAKVEYHPED) show a composition bias toward basic and acidic residues. Positions 260 to 270 (YSSSDSLDHNS) are enriched in polar residues. Over residues 309–318 (SSRDADRSEE) the composition is skewed to basic and acidic residues. The region spanning 329 to 384 (NEWVEQDEPGVYITIKVLPGGKRELRRVRFSRERFGEMHARLWWEENRARIHEQYL) is the BRX 2 domain.

The protein belongs to the BRX family. Expressed in roots.

It is found in the nucleus. The protein is Protein Brevis radix-like 4 (BRXL4) of Arabidopsis thaliana (Mouse-ear cress).